We begin with the raw amino-acid sequence, 336 residues long: Aspartate--ammonia ligase (336 aa).

Belongs to the class-II aminoacyl-tRNA synthetase family. AsnA subfamily.

Its subcellular location is the cytoplasm. It carries out the reaction L-aspartate + NH4(+) + ATP = L-asparagine + AMP + diphosphate + H(+). It participates in amino-acid biosynthesis; L-asparagine biosynthesis; L-asparagine from L-aspartate (ammonia route): step 1/1. In Lactobacillus johnsonii (strain CNCM I-12250 / La1 / NCC 533), this protein is Aspartate--ammonia ligase.